The chain runs to 419 residues: L-rhamnose isomerase (419 aa).

Positions 262, 294, and 296 each coordinate Mn(2+).

The protein belongs to the rhamnose isomerase family. Homotetramer. The cofactor is Mn(2+).

It is found in the cytoplasm. The catalysed reaction is L-rhamnopyranose = L-rhamnulose. The protein operates within carbohydrate degradation; L-rhamnose degradation; glycerone phosphate from L-rhamnose: step 1/3. Functionally, catalyzes the interconversion of L-rhamnose and L-rhamnulose. This Escherichia coli (strain 55989 / EAEC) protein is L-rhamnose isomerase.